The chain runs to 639 residues: DNA primase (639 aa).

Residues 41 to 65 (CPFHNEKSPSFHVRPNHGHFHCFGC) form a CHC2-type zinc finger. The 87-residue stretch at 262–348 (HQAVVVEGYT…AGQSFVAVAP (87 aa)) folds into the Toprim domain. Glutamate 268, aspartate 319, and aspartate 321 together coordinate Mg(2+). Residues 460 to 479 (RAAQRPTAGPPTELAVRPDP) form a disordered region.

The protein belongs to the DnaG primase family. Monomer. Interacts with DnaB. Zn(2+) serves as cofactor. The cofactor is Mg(2+).

It carries out the reaction ssDNA + n NTP = ssDNA/pppN(pN)n-1 hybrid + (n-1) diphosphate.. Functionally, RNA polymerase that catalyzes the synthesis of short RNA molecules used as primers for DNA polymerase during DNA replication. This is DNA primase from Mycobacterium bovis (strain ATCC BAA-935 / AF2122/97).